Here is a 112-residue protein sequence, read N- to C-terminus: ATP synthase epsilon chain (112 aa).

This sequence belongs to the ATPase epsilon chain family. As to quaternary structure, F-type ATPases have 2 components, CF(1) - the catalytic core - and CF(0) - the membrane proton channel. CF(1) has five subunits: alpha(3), beta(3), gamma(1), delta(1), epsilon(1). CF(0) has three main subunits: a, b and c.

The protein localises to the cell inner membrane. Its function is as follows. Produces ATP from ADP in the presence of a proton gradient across the membrane. This chain is ATP synthase epsilon chain (atpC), found in Rickettsia conorii (strain ATCC VR-613 / Malish 7).